The sequence spans 1300 residues: ATP-dependent RNA helicase HrpA (1300 aa).

In terms of domain architecture, Helicase ATP-binding spans 87–250 (LEAIRDHQVV…FNNAPIIEVS (164 aa)). ATP is bound at residue 100-107 (GETGSGKT). Positions 197-200 (DEAH) match the DEAH box motif. One can recognise a Helicase C-terminal domain in the interval 274–444 (QLQAIFDAVD…SVILQMTALG (171 aa)).

This sequence belongs to the DEAD box helicase family. DEAH subfamily.

It carries out the reaction ATP + H2O = ADP + phosphate + H(+). Its function is as follows. Not yet known. The sequence is that of ATP-dependent RNA helicase HrpA (hrpA) from Escherichia coli (strain K12).